A 912-amino-acid chain; its full sequence is Protein translocase subunit SecA (912 aa).

Residues glutamine 86, glycine 104–threonine 108, and aspartate 494 each bind ATP. The disordered stretch occupies residues glutamate 860–arginine 912.

Belongs to the SecA family. As to quaternary structure, monomer and homodimer. Part of the essential Sec protein translocation apparatus which comprises SecA, SecYEG and auxiliary proteins SecDF. Other proteins may also be involved.

Its subcellular location is the cell membrane. The protein resides in the cytoplasm. The enzyme catalyses ATP + H2O + cellular proteinSide 1 = ADP + phosphate + cellular proteinSide 2.. In terms of biological role, part of the Sec protein translocase complex. Interacts with the SecYEG preprotein conducting channel. Has a central role in coupling the hydrolysis of ATP to the transfer of proteins into and across the cell membrane, serving as an ATP-driven molecular motor driving the stepwise translocation of polypeptide chains across the membrane. The sequence is that of Protein translocase subunit SecA from Arthrobacter sp. (strain FB24).